Here is a 766-residue protein sequence, read N- to C-terminus: Phospholipid phosphatase-related protein type 4 (766 aa).

Phosphoserine is present on S37. 4 helical membrane passes run 68–88 (LPCF…SLYF), 120–140 (AIPF…TIMV), 179–199 (FVGV…IIQL), and 248–268 (SFPS…SMYF). N-linked (GlcNAc...) asparagine glycosylation occurs at N269. The next 2 helical transmembrane spans lie at 277 to 297 (KLLK…CGLT) and 309 to 329 (VYCG…YAVG). S347 bears the Phosphoserine mark. N363 carries N-linked (GlcNAc...) asparagine glycosylation. S386 bears the Phosphoserine mark. N-linked (GlcNAc...) asparagine glycosylation occurs at N433. At S439 the chain carries Phosphoserine. 2 disordered regions span residues 454–503 (SKNE…GNQY) and 510–529 (TVPG…IQSR). An N-linked (GlcNAc...) asparagine glycan is attached at N456. Phosphoserine occurs at positions 462 and 474. N-linked (GlcNAc...) asparagine glycans are attached at residues N515 and N545. The residue at position 608 (S608) is a Phosphoserine. Disordered stretches follow at residues 634–654 (PIIQ…KWKA), 672–705 (DSES…GITT), and 741–766 (PERS…PYKD). The span at 688-702 (RKRKHIDSNEHHHHG) shows a compositional bias: basic residues. Residues 743–752 (RSNSPENTRN) show a composition bias toward polar residues.

It belongs to the PA-phosphatase related phosphoesterase family. In terms of processing, O-glycosylated. Probably at Ser-347. As to expression, specifically expressed in neurons (at protein level).

The protein localises to the postsynaptic density membrane. Its function is as follows. Postsynaptic density membrane protein that indirectly regulates glutamatergic synaptic transmission through lysophosphatidic acid (LPA)-mediated signaling pathways. Binds lysophosphatidic acid (LPA) and mediates its internalization into cells. Could act as receptor or a transporter of this lipid at the post-synaptic membrane. Modulates lysophosphatidic acid (LPA) activity in neuron axonal outgrowth during development by attenuating phospholipid-induced axon collapse. The polypeptide is Phospholipid phosphatase-related protein type 4 (Rattus norvegicus (Rat)).